Here is a 320-residue protein sequence, read N- to C-terminus: uncharacterized protein (320 aa).

The protein to S.pombe SpAC23H3.12c.

This is an uncharacterized protein from Saccharomyces cerevisiae (strain ATCC 204508 / S288c) (Baker's yeast).